A 226-amino-acid chain; its full sequence is uncharacterized protein (226 aa).

It to L.innocua lin1255, lin1742 and lin2408.

This is an uncharacterized protein from Listeria innocua serovar 6a (strain ATCC BAA-680 / CLIP 11262).